We begin with the raw amino-acid sequence, 363 residues long: Aminomethyltransferase (363 aa).

This sequence belongs to the GcvT family. In terms of assembly, the glycine cleavage system is composed of four proteins: P, T, L and H.

The enzyme catalyses N(6)-[(R)-S(8)-aminomethyldihydrolipoyl]-L-lysyl-[protein] + (6S)-5,6,7,8-tetrahydrofolate = N(6)-[(R)-dihydrolipoyl]-L-lysyl-[protein] + (6R)-5,10-methylene-5,6,7,8-tetrahydrofolate + NH4(+). The glycine cleavage system catalyzes the degradation of glycine. This chain is Aminomethyltransferase, found in Thermosipho melanesiensis (strain DSM 12029 / CIP 104789 / BI429).